Reading from the N-terminus, the 374-residue chain is Flap endonuclease 1 (374 aa).

An N-domain region spans residues 1-105 (MGVKGLNKLI…GELEKRLLRR (105 aa)). Residue aspartate 34 participates in Mg(2+) binding. Residues arginine 47 and arginine 71 each coordinate DNA. Positions 87, 159, 161, 180, and 182 each coordinate Mg(2+). Residues 123–254 (DHLKFEKRLV…VTAYKLIKEH (132 aa)) form an I-domain region. DNA is bound at residue glutamate 159. Glycine 232 and aspartate 234 together coordinate DNA. Aspartate 234 contacts Mg(2+). Positions 339–347 (VQGRLDSFF) are interaction with PCNA. Residues 353-374 (DDGKDKKRKSTAKDTKSKKQKK) form a disordered region.

It belongs to the XPG/RAD2 endonuclease family. FEN1 subfamily. As to quaternary structure, interacts with PCNA. Three molecules of RAD27 bind to one PCNA trimer with each molecule binding to one PCNA monomer. PCNA stimulates the nuclease activity without altering cleavage specificity. The cofactor is Mg(2+). In terms of processing, phosphorylated. Phosphorylation upon DNA damage induces relocalization to the nuclear plasma.

Its subcellular location is the nucleus. It localises to the nucleolus. It is found in the nucleoplasm. The protein localises to the mitochondrion. In terms of biological role, structure-specific nuclease with 5'-flap endonuclease and 5'-3' exonuclease activities involved in DNA replication and repair. During DNA replication, cleaves the 5'-overhanging flap structure that is generated by displacement synthesis when DNA polymerase encounters the 5'-end of a downstream Okazaki fragment. It enters the flap from the 5'-end and then tracks to cleave the flap base, leaving a nick for ligation. Also involved in the long patch base excision repair (LP-BER) pathway, by cleaving within the apurinic/apyrimidinic (AP) site-terminated flap. Acts as a genome stabilization factor that prevents flaps from equilibrating into structures that lead to duplications and deletions. Also possesses 5'-3' exonuclease activity on nicked or gapped double-stranded DNA, and exhibits RNase H activity. Also involved in replication and repair of rDNA and in repairing mitochondrial DNA. This is Flap endonuclease 1 from Candida tropicalis (strain ATCC MYA-3404 / T1) (Yeast).